A 511-amino-acid polypeptide reads, in one-letter code: Maturase K (511 aa).

Belongs to the intron maturase 2 family. MatK subfamily.

Its subcellular location is the plastid. It is found in the chloroplast. In terms of biological role, usually encoded in the trnK tRNA gene intron. Probably assists in splicing its own and other chloroplast group II introns. The chain is Maturase K from Diplacus aurantiacus (Orange bush monkey flower).